The following is a 360-amino-acid chain: Chorismate synthase (360 aa).

Residues Arg-48 and Arg-54 each coordinate NADP(+). FMN contacts are provided by residues 125 to 127, 246 to 247, Gly-286, 301 to 305, and Arg-327; these read RSS, NA, and KPTSS.

It belongs to the chorismate synthase family. As to quaternary structure, homotetramer. It depends on FMNH2 as a cofactor.

It catalyses the reaction 5-O-(1-carboxyvinyl)-3-phosphoshikimate = chorismate + phosphate. It functions in the pathway metabolic intermediate biosynthesis; chorismate biosynthesis; chorismate from D-erythrose 4-phosphate and phosphoenolpyruvate: step 7/7. Its function is as follows. Catalyzes the anti-1,4-elimination of the C-3 phosphate and the C-6 proR hydrogen from 5-enolpyruvylshikimate-3-phosphate (EPSP) to yield chorismate, which is the branch point compound that serves as the starting substrate for the three terminal pathways of aromatic amino acid biosynthesis. This reaction introduces a second double bond into the aromatic ring system. This Actinobacillus pleuropneumoniae serotype 5b (strain L20) protein is Chorismate synthase.